A 118-amino-acid chain; its full sequence is UPF0342 protein BCE_0953 (118 aa).

Belongs to the UPF0342 family.

The sequence is that of UPF0342 protein BCE_0953 from Bacillus cereus (strain ATCC 10987 / NRS 248).